A 564-amino-acid polypeptide reads, in one-letter code: Mitochondrial distribution and morphology protein 34-1 (564 aa).

In terms of domain architecture, SMP-LTD spans 1 to 195 (MAFKFNWSPL…LPAIIHRLSL (195 aa)). 2 stretches are compositionally biased toward polar residues: residues 297-322 (PDQNDSSASVMSPISPPLSRTQSQTG) and 329-352 (DNASTSSAQSRTPTGPTQSFSSYG). Disordered stretches follow at residues 297–408 (PDQN…VTSA), 414–433 (HEQPDDPVTPPLSPESDQSL), and 452–473 (DLSSEIVRDRAEPSEPRNPFNT). A compositionally biased stretch (basic residues) spans 359–371 (RHSRAHARRRKKR). Residues 383-394 (SDSASVSVSDES) are compositionally biased toward low complexity. Polar residues predominate over residues 396–408 (YTESASAPSVTSA). The span at 452–466 (DLSSEIVRDRAEPSE) shows a compositional bias: basic and acidic residues.

This sequence belongs to the MDM34 family. Component of the ER-mitochondria encounter structure (ERMES) or MDM complex, composed of mmm1, mdm10, mdm12 and mdm34.

It localises to the mitochondrion outer membrane. Functionally, component of the ERMES/MDM complex, which serves as a molecular tether to connect the endoplasmic reticulum (ER) and mitochondria. Components of this complex are involved in the control of mitochondrial shape and protein biogenesis, and function in nonvesicular lipid trafficking between the ER and mitochondria. Mdm34 is required for the interaction of the ER-resident membrane protein mmm1 and the outer mitochondrial membrane-resident beta-barrel protein mdm10. The protein is Mitochondrial distribution and morphology protein 34-1 of Penicillium rubens (strain ATCC 28089 / DSM 1075 / NRRL 1951 / Wisconsin 54-1255) (Penicillium chrysogenum).